The following is a 376-amino-acid chain: MPVEFKLGNSGYTLGVEEELCIVDASTGELVPKIEEIMSRLPEDLAEAVSYELFQSVLEIKTPVCRTVGEAERVLRELRGRVGSWTAACGASLASAGTHPFSRYRDQKVTEHERYRQVIEELRWVATREVIFGQHVHVAVPGPEEAIQAHNRLAEQAPLLLALSANSPYWQGMDTGFESSRVQIFETFPRAGMPPAFPEYAAFEAYVDLMVECGAMDDYTFCWWDVRPHPKLGTIELRVLDSQTHLRHAVALTALTQCIVASSLEDEDAPKGPYHRDIALENKWRASRRGLDAAFFDVDERRNVPARDLARAAVERLRPHAQQLGCEEELLGVLEIVEGGSGSRRQREIYEKSGDFLDVVAFLIEGTRPALAGEPS.

The protein belongs to the glutamate--cysteine ligase type 2 family. YbdK subfamily.

It catalyses the reaction L-cysteine + L-glutamate + ATP = gamma-L-glutamyl-L-cysteine + ADP + phosphate + H(+). Its function is as follows. ATP-dependent carboxylate-amine ligase which exhibits weak glutamate--cysteine ligase activity. The sequence is that of Putative glutamate--cysteine ligase 2-1 from Rubrobacter xylanophilus (strain DSM 9941 / JCM 11954 / NBRC 16129 / PRD-1).